Reading from the N-terminus, the 993-residue chain is UPF0182 protein Sare_4110 (993 aa).

A run of 7 helical transmembrane segments spans residues 18–38 (IGVLVGVFVLFTLLGWGVQAW), 61–81 (LLLFVTVGLAMAVVVGGNLWL), 110–130 (LGTWFAVVSVVVGLFAGLSAQ), 171–191 (GVAFTAVVLALIGALAVHYVF), 209–229 (AHLSALVAVFVLLKAVAYVLD), 260–280 (ILAYISVVVAIAVLVFSNAWM), and 283–303 (LVWPGISLALLGVSAVAIGGI). Disordered regions lie at residues 892 to 937 (QGEK…ADAA) and 974 to 993 (EQAAGPGSAATPTGSPSPGG). Positions 900 to 929 (STPPPSGETPAPTPTPTPTPSSPSVTPPPV) are enriched in pro residues. The span at 976-993 (AAGPGSAATPTGSPSPGG) shows a compositional bias: low complexity.

The protein belongs to the UPF0182 family.

Its subcellular location is the cell membrane. The protein is UPF0182 protein Sare_4110 of Salinispora arenicola (strain CNS-205).